Here is a 120-residue protein sequence, read N- to C-terminus: MISKIDKNKVRLKRHARVRTKLSGTAEKPRLNVYRSNKHIYAQIIDDVKGVTLAQASSQDKDIANTSASKVDLATTVGQEIAKKANDKGIKEIVFDRGGYLYHGRVKALADAARENGLEF.

Belongs to the universal ribosomal protein uL18 family. Part of the 50S ribosomal subunit; part of the 5S rRNA/L5/L18/L25 subcomplex. Contacts the 5S and 23S rRNAs.

In terms of biological role, this is one of the proteins that bind and probably mediate the attachment of the 5S RNA into the large ribosomal subunit, where it forms part of the central protuberance. This is Large ribosomal subunit protein uL18 from Staphylococcus epidermidis (strain ATCC 35984 / DSM 28319 / BCRC 17069 / CCUG 31568 / BM 3577 / RP62A).